Reading from the N-terminus, the 102-residue chain is Large ribosomal subunit protein uL24 (102 aa).

The protein belongs to the universal ribosomal protein uL24 family. Part of the 50S ribosomal subunit.

Its function is as follows. One of two assembly initiator proteins, it binds directly to the 5'-end of the 23S rRNA, where it nucleates assembly of the 50S subunit. Functionally, one of the proteins that surrounds the polypeptide exit tunnel on the outside of the subunit. This is Large ribosomal subunit protein uL24 from Rhizobium leguminosarum bv. trifolii (strain WSM2304).